The chain runs to 684 residues: Glycine--tRNA ligase beta subunit (684 aa).

It belongs to the class-II aminoacyl-tRNA synthetase family. In terms of assembly, tetramer of two alpha and two beta subunits.

It localises to the cytoplasm. It catalyses the reaction tRNA(Gly) + glycine + ATP = glycyl-tRNA(Gly) + AMP + diphosphate. This Pseudomonas syringae pv. tomato (strain ATCC BAA-871 / DC3000) protein is Glycine--tRNA ligase beta subunit.